The following is an 81-amino-acid chain: Large ribosomal subunit protein bL31B (81 aa).

This sequence belongs to the bacterial ribosomal protein bL31 family. Type B subfamily. As to quaternary structure, part of the 50S ribosomal subunit.

The chain is Large ribosomal subunit protein bL31B from Borreliella burgdorferi (strain ZS7) (Borrelia burgdorferi).